The sequence spans 83 residues: Acylphosphatase (83 aa).

Positions Met1 to Tyr83 constitute an Acylphosphatase-like domain. Active-site residues include Arg12 and Asn30.

This sequence belongs to the acylphosphatase family.

It carries out the reaction an acyl phosphate + H2O = a carboxylate + phosphate + H(+). The chain is Acylphosphatase (acyP) from Synechococcus sp. (strain CC9605).